Reading from the N-terminus, the 100-residue chain is Large ribosomal subunit protein uL23 (100 aa).

This sequence belongs to the universal ribosomal protein uL23 family. Part of the 50S ribosomal subunit. Contacts protein L29, and trigger factor when it is bound to the ribosome.

One of the early assembly proteins it binds 23S rRNA. One of the proteins that surrounds the polypeptide exit tunnel on the outside of the ribosome. Forms the main docking site for trigger factor binding to the ribosome. The sequence is that of Large ribosomal subunit protein uL23 from Photorhabdus laumondii subsp. laumondii (strain DSM 15139 / CIP 105565 / TT01) (Photorhabdus luminescens subsp. laumondii).